Consider the following 130-residue polypeptide: MKSLGRHLVAEFYECDREVLDNVQLIEQEMKQAAYESGATIVTSTFHRFLPYGVSGVVVISESHLTIHTWPEYGYAAIDLFTCGEDVDPWKAFEHLKKALKAKRVHVVEHERGRYDEIGIPEDSPHKAAV.

S63 (schiff-base intermediate with substrate; via pyruvic acid) is an active-site residue. At S63 the chain carries Pyruvic acid (Ser); by autocatalysis. H68 acts as the Proton acceptor; for processing activity in catalysis. Catalysis depends on C83, which acts as the Proton donor; for catalytic activity.

This sequence belongs to the prokaryotic AdoMetDC family. Type 1 subfamily. In terms of assembly, heterotetramer of two alpha and two beta chains arranged as a dimer of alpha/beta heterodimers. Pyruvate is required as a cofactor. Post-translationally, is synthesized initially as an inactive proenzyme. Formation of the active enzyme involves a self-maturation process in which the active site pyruvoyl group is generated from an internal serine residue via an autocatalytic post-translational modification. Two non-identical subunits are generated from the proenzyme in this reaction, and the pyruvate is formed at the N-terminus of the alpha chain, which is derived from the carboxyl end of the proenzyme. The post-translation cleavage follows an unusual pathway, termed non-hydrolytic serinolysis, in which the side chain hydroxyl group of the serine supplies its oxygen atom to form the C-terminus of the beta chain, while the remainder of the serine residue undergoes an oxidative deamination to produce ammonia and the pyruvoyl group blocking the N-terminus of the alpha chain.

It catalyses the reaction S-adenosyl-L-methionine + H(+) = S-adenosyl 3-(methylsulfanyl)propylamine + CO2. It participates in amine and polyamine biosynthesis; S-adenosylmethioninamine biosynthesis; S-adenosylmethioninamine from S-adenosyl-L-methionine: step 1/1. In terms of biological role, catalyzes the decarboxylation of S-adenosylmethionine to S-adenosylmethioninamine (dcAdoMet), the propylamine donor required for the synthesis of the polyamines spermine and spermidine from the diamine putrescine. This chain is S-adenosylmethionine decarboxylase proenzyme (speH), found in Thermotoga maritima (strain ATCC 43589 / DSM 3109 / JCM 10099 / NBRC 100826 / MSB8).